A 123-amino-acid polypeptide reads, in one-letter code: Large ribosomal subunit protein bL12 (123 aa).

Belongs to the bacterial ribosomal protein bL12 family. Homodimer. Part of the ribosomal stalk of the 50S ribosomal subunit. Forms a multimeric L10(L12)X complex, where L10 forms an elongated spine to which 2 to 4 L12 dimers bind in a sequential fashion. Binds GTP-bound translation factors.

Functionally, forms part of the ribosomal stalk which helps the ribosome interact with GTP-bound translation factors. Is thus essential for accurate translation. This is Large ribosomal subunit protein bL12 from Psychrobacter arcticus (strain DSM 17307 / VKM B-2377 / 273-4).